Reading from the N-terminus, the 394-residue chain is MARIETRTEPMVLNMGPHHPSMHGVLRLIVTLDGEDVVDCEPVIGYLHRGMEKIAENRTTVMYVPYVSRWDYAAGMFNEAVTVNAPEKLAGVAVPKRASYIRVIMLELNRIANHLLWFGPFLADVGAQTPFFYQFREREMIYDLWEAATGYRMVNNNYFRVGGVAADLPYGWVDKCLEFCDYFLPVIDEYEKLVTNNPIFRRRIEGIGTISREEAINWGLSGPMLRASGVKWDLRKVDHYECYDDFDWDVQWETAGDCLARYTVRMREMRESVKIIKQAIKGLPGGPYENLEAKRLAAGKKSEWDAFDYQYIGKKVSPTFKMPKGEIYARVESGKGELGIYLIGDDNVFPWRWKIRPADFNNLQILPHLLRGMKVADVVVILGSIDVIMGSVDR.

It belongs to the complex I 49 kDa subunit family. As to quaternary structure, NDH-1 can be composed of about 15 different subunits; different subcomplexes with different compositions have been identified which probably have different functions.

The protein resides in the cellular thylakoid membrane. It carries out the reaction a plastoquinone + NADH + (n+1) H(+)(in) = a plastoquinol + NAD(+) + n H(+)(out). The catalysed reaction is a plastoquinone + NADPH + (n+1) H(+)(in) = a plastoquinol + NADP(+) + n H(+)(out). NDH-1 shuttles electrons from an unknown electron donor, via FMN and iron-sulfur (Fe-S) centers, to quinones in the respiratory and/or the photosynthetic chain. The immediate electron acceptor for the enzyme in this species is believed to be plastoquinone. Couples the redox reaction to proton translocation, and thus conserves the redox energy in a proton gradient. Cyanobacterial NDH-1 also plays a role in inorganic carbon-concentration. This Nostoc sp. (strain PCC 7120 / SAG 25.82 / UTEX 2576) protein is NAD(P)H-quinone oxidoreductase subunit H.